The sequence spans 83 residues: Neurotoxin LmNaTx3 (83 aa).

Positions 1 to 21 (MQLKIQLLMLVLMIVLTDVYS) are cleaved as a signal peptide. The LCN-type CS-alpha/beta domain maps to 22–83 (KDGFIVSKKN…NIAMKNKNYC (62 aa)). Disulfide bonds link C32–C83, C36–C59, C45–C64, and C49–C66.

It belongs to the long (4 C-C) scorpion toxin superfamily. Sodium channel inhibitor family. Alpha subfamily. As to expression, expressed by the venom gland.

The protein localises to the secreted. In terms of biological role, binds voltage-independently at site-3 of voltage-gated sodium channels (Nav) and inhibits the inactivation of the activated channels, thereby blocking neuronal transmission. This chain is Neurotoxin LmNaTx3, found in Lychas mucronatus (Chinese swimming scorpion).